The primary structure comprises 389 residues: Ribonucleoside-diphosphate reductase subunit M2 (389 aa).

Position 20 is a phosphoserine (S20). T33 carries the post-translational modification Phosphothreonine. The Cy motif lies at 49–51 (RRI). The Fe cation site is built by D138, E169, and H172. Y176 is an active-site residue. The Fe cation site is built by E232, E266, and H269.

It belongs to the ribonucleoside diphosphate reductase small chain family. As to quaternary structure, heterodimer of a large and a small subunit. Interacts (via Cy motif and when phosphorylated at Thr-33) with CCNF; the interaction occurs exclusively in G2 and early M. It depends on Fe cation as a cofactor. In terms of processing, phosphorylation on Ser-20 relieves the inhibitory effect on Wnt signaling. Phosphorylated on Thr-33 by CDK1 and CDK2; predominantly in G2 and M phase. Ubiquitinated by the SCF(CCNF) E3 ubiquitin-protein ligase complex; leading to its degradation by the proteasome.

The protein localises to the cytoplasm. The protein resides in the nucleus. It carries out the reaction a 2'-deoxyribonucleoside 5'-diphosphate + [thioredoxin]-disulfide + H2O = a ribonucleoside 5'-diphosphate + [thioredoxin]-dithiol. Provides the precursors necessary for DNA synthesis. Catalyzes the biosynthesis of deoxyribonucleotides from the corresponding ribonucleotides. Inhibits Wnt signaling. This Macaca fascicularis (Crab-eating macaque) protein is Ribonucleoside-diphosphate reductase subunit M2 (RRM2).